A 307-amino-acid polypeptide reads, in one-letter code: Serine/threonine-protein phosphatase 4 catalytic subunit (307 aa).

Mn(2+) is bound by residues Asp-54, His-56, Asp-82, and Asn-114. The active-site Proton donor is the His-115. Residues His-164 and His-238 each coordinate Mn(2+). The residue at position 307 (Leu-307) is a Leucine methyl ester.

The protein belongs to the PPP phosphatase family. PP-4 (PP-X) subfamily. As to quaternary structure, serine/threonine-protein phosphatase 4 (PP4) occurs in different assemblies of the catalytic and one or more regulatory subunits. Mn(2+) is required as a cofactor.

The protein localises to the cytoplasm. It localises to the nucleus. It is found in the cytoskeleton. The protein resides in the microtubule organizing center. Its subcellular location is the centrosome. It carries out the reaction O-phospho-L-seryl-[protein] + H2O = L-seryl-[protein] + phosphate. The catalysed reaction is O-phospho-L-threonyl-[protein] + H2O = L-threonyl-[protein] + phosphate. Functionally, protein phosphatase that regulates many processes such as microtubule organization at centrosomes. The polypeptide is Serine/threonine-protein phosphatase 4 catalytic subunit (ppp4c) (Xenopus laevis (African clawed frog)).